Consider the following 358-residue polypeptide: Src kinase-associated phosphoprotein 2 (358 aa).

Phosphoserine occurs at positions 5 and 6. Positions 62–88 (ESQDKGDAEDGEEYDDPFAGPPDTISL) are disordered. A Phosphotyrosine modification is found at Tyr75. Phosphoserine is present on residues Ser87 and Ser90. Residues 116–219 (FVLKAGYLEK…WVQQLNFVLQ (104 aa)) enclose the PH domain. Residues Tyr151 and Tyr197 each carry the phosphotyrosine modification. Phosphoserine is present on Ser223. Residues 232 to 254 (ERGELYDDVDHPLPSSSPTRSLP) are disordered. Low complexity predominate over residues 243 to 253 (PLPSSSPTRSL). Phosphotyrosine is present on Tyr260. Phosphoserine occurs at positions 282 and 285. In terms of domain architecture, SH3 spans 296-357 (NYANFYQGLW…PKAYVMEMYD (62 aa)).

Belongs to the SKAP family. Interacts with FYB1, which is required for SKAP2 protein stability. Interacts with PTPNS1. Part of a complex consisting of SKAP2, FYB1 and PTPNS1. Part of a complex consisting of SKAP2, FYB1 and LILRB3. Interacts with LAT, GRB2, PTK2B and PRAM1. May interact with actin. May interact with FYN, HCK and LYN. Interacts with FASLG.

It is found in the cytoplasm. In terms of biological role, may be involved in B-cell and macrophage adhesion processes. In B-cells, may act by coupling the B-cell receptor (BCR) to integrin activation. May play a role in src signaling pathway. This Bos taurus (Bovine) protein is Src kinase-associated phosphoprotein 2 (SKAP2).